A 912-amino-acid polypeptide reads, in one-letter code: Protein transport protein SEC24-2 (912 aa).

A compositionally biased stretch (basic residues) spans 1 to 11; that stretch reads MSNPSRPKKRV. 2 disordered regions span residues 1–83 and 102–129; these read MSNP…QQIS and PNAY…PGRP. Composition is skewed to polar residues over residues 33–45, 53–74, and 106–129; these read SGQT…SGSA, GQFT…MTPA, and YQPN…PGRP. C226, C229, C248, and C251 together coordinate Zn(2+). A zinc finger-like region spans residues 226–251; sequence CRRCRGYLNPFVKILQVESKWRCNFC.

This sequence belongs to the SEC23/SEC24 family. SEC24 subfamily. In terms of assembly, the COPII coat is composed of at least 5 proteins: the SEC23/24 complex, the SEC13/31 complex, and the protein SAR1. Golgi apparatus membrane; Peripheral membrane protein; Cytoplasmic side.

It is found in the cytoplasm. It localises to the cytoplasmic vesicle. Its subcellular location is the COPII-coated vesicle membrane. The protein localises to the endoplasmic reticulum membrane. The protein resides in the golgi apparatus membrane. In terms of biological role, component of the coat protein complex II (COPII) which promotes the formation of transport vesicles from the endoplasmic reticulum (ER). The coat has two main functions, the physical deformation of the endoplasmic reticulum membrane into vesicles and the selection of cargo molecules. The sequence is that of Protein transport protein SEC24-2 (SEC242) from Naumovozyma castellii (Yeast).